The sequence spans 202 residues: Small ribosomal subunit protein uS4c (202 aa).

Positions 90–148 constitute an S4 RNA-binding domain; sequence MRLDNVIFRLGMSSTIPGARQLVNHRHIMINDEMVDTPGYNCKPRDIITLKNISESRSG.

It belongs to the universal ribosomal protein uS4 family. As to quaternary structure, part of the 30S ribosomal subunit. Contacts protein S5. The interaction surface between S4 and S5 is involved in control of translational fidelity.

It is found in the plastid. It localises to the chloroplast. In terms of biological role, one of the primary rRNA binding proteins, it binds directly to 16S rRNA where it nucleates assembly of the body of the 30S subunit. Functionally, with S5 and S12 plays an important role in translational accuracy. This Haplomitrium hookeri (Hooker's flapwort) protein is Small ribosomal subunit protein uS4c (rps4).